A 451-amino-acid chain; its full sequence is tRNA-2-methylthio-N(6)-dimethylallyladenosine synthase (451 aa).

Residues 3-120 form the MTTase N-terminal domain; it reads KKLFIQTHGC…LPEMVNAAGK (118 aa). Cys-12, Cys-49, Cys-83, Cys-156, Cys-160, and Cys-163 together coordinate [4Fe-4S] cluster. Residues 142–374 enclose the Radical SAM core domain; it reads RVEGAEAFVS…QRRISQQAYD (233 aa). The TRAM domain occupies 377 to 441; that stretch reads LSMVGEVQRI…PNSLLGELVG (65 aa).

The protein belongs to the methylthiotransferase family. MiaB subfamily. Monomer. [4Fe-4S] cluster serves as cofactor.

It localises to the cytoplasm. It carries out the reaction N(6)-dimethylallyladenosine(37) in tRNA + (sulfur carrier)-SH + AH2 + 2 S-adenosyl-L-methionine = 2-methylsulfanyl-N(6)-dimethylallyladenosine(37) in tRNA + (sulfur carrier)-H + 5'-deoxyadenosine + L-methionine + A + S-adenosyl-L-homocysteine + 2 H(+). In terms of biological role, catalyzes the methylthiolation of N6-(dimethylallyl)adenosine (i(6)A), leading to the formation of 2-methylthio-N6-(dimethylallyl)adenosine (ms(2)i(6)A) at position 37 in tRNAs that read codons beginning with uridine. In Marinomonas sp. (strain MWYL1), this protein is tRNA-2-methylthio-N(6)-dimethylallyladenosine synthase.